We begin with the raw amino-acid sequence, 115 residues long: Large ribosomal subunit protein P2x (115 aa).

Positions 78–115 are disordered; the sequence is GGGGGAASAAEPVAESKKKVEEVKDESSDDAGMMGLFD. The span at 91-103 shows a compositional bias: basic and acidic residues; it reads AESKKKVEEVKDE. Serine 104 and serine 105 each carry phosphoserine.

This sequence belongs to the eukaryotic ribosomal protein P1/P2 family. As to quaternary structure, P1 and P2 exist as dimers at the large ribosomal subunit.

Functionally, plays an important role in the elongation step of protein synthesis. This is Large ribosomal subunit protein P2x (RPP2C) from Arabidopsis thaliana (Mouse-ear cress).